Here is a 279-residue protein sequence, read N- to C-terminus: Bifunctional protein FolD (279 aa).

NADP(+) contacts are provided by residues G159–S161, S184, and T225.

It belongs to the tetrahydrofolate dehydrogenase/cyclohydrolase family. Homodimer.

The catalysed reaction is (6R)-5,10-methylene-5,6,7,8-tetrahydrofolate + NADP(+) = (6R)-5,10-methenyltetrahydrofolate + NADPH. It catalyses the reaction (6R)-5,10-methenyltetrahydrofolate + H2O = (6R)-10-formyltetrahydrofolate + H(+). The protein operates within one-carbon metabolism; tetrahydrofolate interconversion. Catalyzes the oxidation of 5,10-methylenetetrahydrofolate to 5,10-methenyltetrahydrofolate and then the hydrolysis of 5,10-methenyltetrahydrofolate to 10-formyltetrahydrofolate. This Methanospirillum hungatei JF-1 (strain ATCC 27890 / DSM 864 / NBRC 100397 / JF-1) protein is Bifunctional protein FolD.